Reading from the N-terminus, the 219-residue chain is Probable GTP-binding protein EngB (219 aa).

The 184-residue stretch at 24–207 (VQPEIAFAGR…HELIESWLRP (184 aa)) folds into the EngB-type G domain. Residues 32–39 (GRSNAGKS), 59–63 (GRTQH), 81–84 (DLPG), 148–151 (TKCD), and 186–188 (FSA) each bind GTP. Mg(2+) contacts are provided by S39 and T61.

The protein belongs to the TRAFAC class TrmE-Era-EngA-EngB-Septin-like GTPase superfamily. EngB GTPase family. Mg(2+) is required as a cofactor.

Necessary for normal cell division and for the maintenance of normal septation. This Burkholderia ambifaria (strain ATCC BAA-244 / DSM 16087 / CCUG 44356 / LMG 19182 / AMMD) (Burkholderia cepacia (strain AMMD)) protein is Probable GTP-binding protein EngB.